Here is a 116-residue protein sequence, read N- to C-terminus: Class I hydrophobin 1 (116 aa).

The first 19 residues, 1-19 (MLFKQAILVATTLTDLAVA), serve as a signal peptide directing secretion. 4 disulfides stabilise this stretch: Cys35/Cys95, Cys42/Cys89, Cys43/Cys76, and Cys96/Cys109. N-linked (GlcNAc...) asparagine glycosylation is found at Asn44 and Asn100.

The protein belongs to the fungal hydrophobin family. As to quaternary structure, self-assembles to form functional amyloid fibrils called rodlets. Self-assembly into fibrillar rodlets occurs spontaneously at hydrophobic:hydrophilic interfaces and the rodlets further associate laterally to form amphipathic monolayers.

The protein localises to the secreted. The protein resides in the cell wall. Aerial growth, conidiation, and dispersal of filamentous fungi in the environment rely upon a capability of their secreting small amphipathic proteins called hydrophobins (HPBs) with low sequence identity. Class I can self-assemble into an outermost layer of rodlet bundles on aerial cell surfaces, conferring cellular hydrophobicity that supports fungal growth, development and dispersal; whereas Class II form highly ordered films at water-air interfaces through intermolecular interactions but contribute nothing to the rodlet structure. This chain is Class I hydrophobin 1, found in Pleurotus ostreatus (Oyster mushroom).